Consider the following 142-residue polypeptide: Putative 2'-deoxynucleoside 5'-phosphate N-hydrolase 1 (142 aa).

Substrate is bound by residues phenylalanine 4–arginine 10, tyrosine 19, histidine 36, glutamate 82, and serine 106–methionine 108.

The protein belongs to the 2'-deoxynucleoside 5'-phosphate N-hydrolase 1 family. In terms of assembly, monomer and homodimer.

The enzyme catalyses a pyrimidine 2'-deoxyribonucleoside 5'-phosphate + H2O = a pyrimidine nucleobase + 2-deoxy-D-ribose 5-phosphate. It carries out the reaction a purine 2'-deoxyribonucleoside 5'-phosphate + H2O = a purine nucleobase + 2-deoxy-D-ribose 5-phosphate. Its function is as follows. Catalyzes the cleavage of the N-glycosidic bond of deoxyribonucleoside 5'-monophosphates to yield deoxyribose 5-phosphate and a purine or pyrimidine base. In Syntrophotalea carbinolica (strain DSM 2380 / NBRC 103641 / GraBd1) (Pelobacter carbinolicus), this protein is Putative 2'-deoxynucleoside 5'-phosphate N-hydrolase 1.